A 256-amino-acid polypeptide reads, in one-letter code: Triosephosphate isomerase (256 aa).

10 to 12 contributes to the substrate binding site; sequence NWK. The Electrophile role is filled by H97. The active-site Proton acceptor is E169. Residues G175, S214, and 235–236 contribute to the substrate site; that span reads GG.

This sequence belongs to the triosephosphate isomerase family. In terms of assembly, homodimer.

It is found in the cytoplasm. The catalysed reaction is D-glyceraldehyde 3-phosphate = dihydroxyacetone phosphate. Its pathway is carbohydrate biosynthesis; gluconeogenesis. It functions in the pathway carbohydrate degradation; glycolysis; D-glyceraldehyde 3-phosphate from glycerone phosphate: step 1/1. Functionally, involved in the gluconeogenesis. Catalyzes stereospecifically the conversion of dihydroxyacetone phosphate (DHAP) to D-glyceraldehyde-3-phosphate (G3P). The polypeptide is Triosephosphate isomerase (Actinobacillus pleuropneumoniae serotype 7 (strain AP76)).